The following is a 172-amino-acid chain: Co-chaperone protein HscB (172 aa).

One can recognise a J domain in the interval 2–74 (DYFTLFGLPI…LKRAEYMLSL (73 aa)).

It belongs to the HscB family. As to quaternary structure, interacts with HscA and stimulates its ATPase activity. Interacts with IscU.

Its function is as follows. Co-chaperone involved in the maturation of iron-sulfur cluster-containing proteins. Seems to help targeting proteins to be folded toward HscA. In Pectobacterium atrosepticum (strain SCRI 1043 / ATCC BAA-672) (Erwinia carotovora subsp. atroseptica), this protein is Co-chaperone protein HscB.